Consider the following 124-residue polypeptide: Hemoglobin subunit alpha (124 aa).

The Globin domain occupies Pro-1–Arg-124. His-57 contributes to the O2 binding site. Residue His-79 participates in heme b binding.

This sequence belongs to the globin family. As to quaternary structure, hb 1 is a heterotetramer of two alpha and two beta-1 chains. Hb 2 is a heterotetramer of two alpha and two beta-2 chains. Hb 3 is a heterotetramer of two alpha and two beta-3 chains. As to expression, red blood cells (at protein level).

Functionally, involved in oxygen transport from gills to the various peripheral tissues. The sequence is that of Hemoglobin subunit alpha from Somniosus microcephalus (Greenland sleeper shark).